The primary structure comprises 418 residues: Gamma-glutamyl phosphate reductase (418 aa).

The protein belongs to the gamma-glutamyl phosphate reductase family.

The protein localises to the cytoplasm. It carries out the reaction L-glutamate 5-semialdehyde + phosphate + NADP(+) = L-glutamyl 5-phosphate + NADPH + H(+). It functions in the pathway amino-acid biosynthesis; L-proline biosynthesis; L-glutamate 5-semialdehyde from L-glutamate: step 2/2. Functionally, catalyzes the NADPH-dependent reduction of L-glutamate 5-phosphate into L-glutamate 5-semialdehyde and phosphate. The product spontaneously undergoes cyclization to form 1-pyrroline-5-carboxylate. This chain is Gamma-glutamyl phosphate reductase, found in Thermobifida fusca (strain YX).